The sequence spans 186 residues: Probable RNA 2'-phosphotransferase (186 aa).

The protein belongs to the KptA/TPT1 family.

Functionally, removes the 2'-phosphate from RNA via an intermediate in which the phosphate is ADP-ribosylated by NAD followed by a presumed transesterification to release the RNA and generate ADP-ribose 1''-2''-cyclic phosphate (APPR&gt;P). May function as an ADP-ribosylase. The chain is Probable RNA 2'-phosphotransferase from Clostridium perfringens (strain SM101 / Type A).